The chain runs to 415 residues: Secernin-2 (415 aa).

Residue cysteine 8 is part of the active site.

This sequence belongs to the peptidase C69 family. Secernin subfamily.

The polypeptide is Secernin-2 (scrn2) (Danio rerio (Zebrafish)).